The chain runs to 65 residues: Toxin Co52 (65 aa).

An LCN-type CS-alpha/beta domain is found at 2–65 (EDGYLVDKTG…PTWPLPNKTC (64 aa)). 4 disulfides stabilise this stretch: Cys-12-Cys-65, Cys-16-Cys-41, Cys-25-Cys-46, and Cys-29-Cys-48.

As to expression, expressed by the venom gland.

The protein resides in the secreted. Its function is as follows. Beta toxins bind voltage-independently at site-4 of sodium channels (Nav) and shift the voltage of activation toward more negative potentials thereby affecting sodium channel activation and promoting spontaneous and repetitive firing. Not toxic to mice, chicks, crickets or woodlice (at 5 ug). The sequence is that of Toxin Co52 from Centruroides ornatus (Scorpion).